We begin with the raw amino-acid sequence, 161 residues long: Large ribosomal subunit protein uL15 (161 aa).

A disordered region spans residues 1-41 (MTKLNELAPAPGSTKGRMRVGRGPGSGKGKTAGRGVKGQKA). The segment covering 22-36 (RGPGSGKGKTAGRGV) has biased composition (gly residues).

Belongs to the universal ribosomal protein uL15 family. As to quaternary structure, part of the 50S ribosomal subunit.

Functionally, binds to the 23S rRNA. The chain is Large ribosomal subunit protein uL15 from Caulobacter sp. (strain K31).